The primary structure comprises 147 residues: UPAR/Ly6 domain-containing protein CG9338 (147 aa).

The first 23 residues, 1-23 (MVSSVKMILALTVLATVACTGYA), serve as a signal peptide directing secretion. Over 24-126 (IKCYQCDSLT…VCTEDECNGT (103 aa)) the chain is Extracellular. 5 disulfides stabilise this stretch: cysteine 26–cysteine 72, cysteine 29–cysteine 37, cysteine 51–cysteine 89, cysteine 101–cysteine 115, and cysteine 118–cysteine 123. A glycan (N-linked (GlcNAc...) asparagine) is linked at asparagine 68. Asparagine 124 is lipidated: GPI-anchor amidated asparagine. Positions 125–147 (GTSSLAPIAGVILLFFGLARLLA) are cleaved as a propeptide — removed in mature form. The helical transmembrane segment at 127 to 147 (SSLAPIAGVILLFFGLARLLA) threads the bilayer.

This sequence belongs to the quiver family.

The protein resides in the cell membrane. In terms of biological role, may be involved in regulating neuron excitability. The chain is UPAR/Ly6 domain-containing protein CG9338 from Drosophila melanogaster (Fruit fly).